Here is a 115-residue protein sequence, read N- to C-terminus: Movement protein TGB2 (115 aa).

At 1 to 13 (MSAQGHRLTAPVN) the chain is on the cytoplasmic side. A helical transmembrane segment spans residues 14-34 (SEKVYIVLGLSFALISITFLL). The Lumenal portion of the chain corresponds to 35–74 (SRNNLPHVGDNIHSLPHGDAYRDGTKAILYNSPNFGSRTS). Residues 75–95 (LNNSKNAAFAAVLLLSLLIYG) form a helical membrane-spanning segment. Topologically, residues 96–115 (SRCLSQRNHLCACGNNHSSN) are cytoplasmic.

It belongs to the Tymovirales TGBp2 protein family.

Its subcellular location is the host endoplasmic reticulum membrane. Plays a role in viral cell-to-cell propagation, by facilitating genome transport to neighboring plant cells through plasmosdesmata,. The sequence is that of Movement protein TGB2 from Potato virus X (strain HB) (PVX).